A 327-amino-acid chain; its full sequence is Lipoyl synthase (327 aa).

[4Fe-4S] cluster is bound by residues C72, C77, C83, C98, C102, C105, and S313. The Radical SAM core domain maps to 83-302; it reads CWSHGTATIM…RKVGLEKGFL (220 aa).

It belongs to the radical SAM superfamily. Lipoyl synthase family. It depends on [4Fe-4S] cluster as a cofactor.

It localises to the cytoplasm. It catalyses the reaction [[Fe-S] cluster scaffold protein carrying a second [4Fe-4S](2+) cluster] + N(6)-octanoyl-L-lysyl-[protein] + 2 oxidized [2Fe-2S]-[ferredoxin] + 2 S-adenosyl-L-methionine + 4 H(+) = [[Fe-S] cluster scaffold protein] + N(6)-[(R)-dihydrolipoyl]-L-lysyl-[protein] + 4 Fe(3+) + 2 hydrogen sulfide + 2 5'-deoxyadenosine + 2 L-methionine + 2 reduced [2Fe-2S]-[ferredoxin]. The protein operates within protein modification; protein lipoylation via endogenous pathway; protein N(6)-(lipoyl)lysine from octanoyl-[acyl-carrier-protein]: step 2/2. Its function is as follows. Catalyzes the radical-mediated insertion of two sulfur atoms into the C-6 and C-8 positions of the octanoyl moiety bound to the lipoyl domains of lipoate-dependent enzymes, thereby converting the octanoylated domains into lipoylated derivatives. The sequence is that of Lipoyl synthase from Francisella tularensis subsp. mediasiatica (strain FSC147).